Here is an 81-residue protein sequence, read N- to C-terminus: Large ribosomal subunit protein bL31B (81 aa).

This sequence belongs to the bacterial ribosomal protein bL31 family. Type B subfamily. As to quaternary structure, part of the 50S ribosomal subunit.

The sequence is that of Large ribosomal subunit protein bL31B from Listeria innocua serovar 6a (strain ATCC BAA-680 / CLIP 11262).